A 340-amino-acid polypeptide reads, in one-letter code: Cytosolic Fe-S cluster assembly factor NBP35 (340 aa).

Positions 1–41 (MPSLVDPVANKTDEGNNRTDLKAPEPEHCPGTESEEAGKAD) are disordered. A compositionally biased stretch (basic and acidic residues) spans 11-30 (KTDEGNNRTDLKAPEPEHCP). [4Fe-4S] cluster-binding residues include Cys-29, Cys-43, Cys-46, and Cys-52. 82-89 (GKGGVGKS) contacts ATP. Positions 255 and 258 each coordinate [4Fe-4S] cluster.

This sequence belongs to the Mrp/NBP35 ATP-binding proteins family. NUBP1/NBP35 subfamily. In terms of assembly, heterotetramer of 2 NBP35 and 2 CFD1 chains. [4Fe-4S] cluster serves as cofactor.

It is found in the cytoplasm. Its subcellular location is the nucleus. In terms of biological role, component of the cytosolic iron-sulfur (Fe/S) protein assembly (CIA) machinery. Required for maturation of extramitochondrial Fe-S proteins. The NBP35-CFD1 heterotetramer forms a Fe-S scaffold complex, mediating the de novo assembly of an Fe-S cluster and its transfer to target apoproteins. Required for biogenesis and export of both ribosomal subunits, which may reflect a role in assembly of the Fe/S clusters in RLI1, a protein which performs rRNA processing and ribosome export. This chain is Cytosolic Fe-S cluster assembly factor NBP35, found in Yarrowia lipolytica (strain CLIB 122 / E 150) (Yeast).